We begin with the raw amino-acid sequence, 355 residues long: Ubiquinone biosynthesis protein COQ4 homolog, mitochondrial (355 aa).

Zn(2+)-binding residues include His134, Asp135, His138, and Glu150.

It belongs to the COQ4 family. In terms of assembly, component of a multi-subunit COQ enzyme complex. It depends on Zn(2+) as a cofactor.

The protein localises to the mitochondrion inner membrane. It carries out the reaction a 4-hydroxy-3-methoxy-5-(all-trans-polyprenyl)benzoate + H(+) = a 2-methoxy-6-(all-trans-polyprenyl)phenol + CO2. Its pathway is cofactor biosynthesis; ubiquinone biosynthesis. Its function is as follows. Lyase that catalyzes the C1-decarboxylation of 4-hydroxy-3-methoxy-5-(all-trans-polyprenyl)benzoic acid into 2-methoxy-6-(all-trans-polyprenyl)phenol during ubiquinone biosynthesis. In Plasmodium knowlesi (strain H), this protein is Ubiquinone biosynthesis protein COQ4 homolog, mitochondrial.